Reading from the N-terminus, the 167-residue chain is UPF0225 protein VV1358 (167 aa).

The protein belongs to the UPF0225 family.

In Vibrio vulnificus (strain YJ016), this protein is UPF0225 protein VV1358.